The chain runs to 169 residues: MTKTDRVCVGAIAGAFGVKGEVRLKSFCTEPTDIASYGPLSTEKGDRSFRVTLTRPVAGGLGARLSDVTTKEEADALRGVGLYVDRARLPSLGDDEFYHADLIGLEVRDTGGALLGRVHAVHNHGAGDILEIAGAVGREGLLLPFTRAVVPTVDLAAGRIVADPPEGLD.

One can recognise a PRC barrel domain in the interval 94–168 (DDEFYHADLI…RIVADPPEGL (75 aa)).

It belongs to the RimM family. As to quaternary structure, binds ribosomal protein uS19.

It localises to the cytoplasm. An accessory protein needed during the final step in the assembly of 30S ribosomal subunit, possibly for assembly of the head region. Essential for efficient processing of 16S rRNA. May be needed both before and after RbfA during the maturation of 16S rRNA. It has affinity for free ribosomal 30S subunits but not for 70S ribosomes. The chain is Ribosome maturation factor RimM from Cereibacter sphaeroides (strain ATCC 17029 / ATH 2.4.9) (Rhodobacter sphaeroides).